The primary structure comprises 250 residues: Indole-3-glycerol phosphate synthase (250 aa).

This sequence belongs to the TrpC family.

It catalyses the reaction 1-(2-carboxyphenylamino)-1-deoxy-D-ribulose 5-phosphate + H(+) = (1S,2R)-1-C-(indol-3-yl)glycerol 3-phosphate + CO2 + H2O. It functions in the pathway amino-acid biosynthesis; L-tryptophan biosynthesis; L-tryptophan from chorismate: step 4/5. The polypeptide is Indole-3-glycerol phosphate synthase (Bacillus velezensis (strain DSM 23117 / BGSC 10A6 / LMG 26770 / FZB42) (Bacillus amyloliquefaciens subsp. plantarum)).